Reading from the N-terminus, the 159-residue chain is Cytochrome c-type biogenesis protein CcmE (159 aa).

The Cytoplasmic segment spans residues 1–23 (MNNSSLENSASLKVILKQRKKKR). A helical; Signal-anchor for type II membrane protein transmembrane segment spans residues 24 to 44 (LLIILLCCLVMAIAASLVVYA). Residues 45–159 (MRHAVSFFRM…RLKKHYSVEK (115 aa)) are Periplasmic-facing. Residues His138 and Tyr142 each coordinate heme.

This sequence belongs to the CcmE/CycJ family.

It is found in the cell inner membrane. Heme chaperone required for the biogenesis of c-type cytochromes. Transiently binds heme delivered by CcmC and transfers the heme to apo-cytochromes in a process facilitated by CcmF and CcmH. The polypeptide is Cytochrome c-type biogenesis protein CcmE (Bartonella tribocorum (strain CIP 105476 / IBS 506)).